A 354-amino-acid chain; its full sequence is Uroporphyrinogen decarboxylase (354 aa).

Substrate contacts are provided by residues Arg25–Arg29, Asp75, Tyr152, Thr207, and His330.

It belongs to the uroporphyrinogen decarboxylase family. As to quaternary structure, homodimer.

It is found in the cytoplasm. The enzyme catalyses uroporphyrinogen III + 4 H(+) = coproporphyrinogen III + 4 CO2. It functions in the pathway porphyrin-containing compound metabolism; protoporphyrin-IX biosynthesis; coproporphyrinogen-III from 5-aminolevulinate: step 4/4. Functionally, catalyzes the decarboxylation of four acetate groups of uroporphyrinogen-III to yield coproporphyrinogen-III. This Xanthomonas campestris pv. campestris (strain 8004) protein is Uroporphyrinogen decarboxylase.